The chain runs to 96 residues: Large ribosomal subunit protein eL14 (96 aa).

Belongs to the eukaryotic ribosomal protein eL14 family.

The sequence is that of Large ribosomal subunit protein eL14 from Metallosphaera sedula (strain ATCC 51363 / DSM 5348 / JCM 9185 / NBRC 15509 / TH2).